The chain runs to 270 residues: Putative phosphoenolpyruvate synthase regulatory protein (270 aa).

150 to 157 (GVSRCGKT) contributes to the ADP binding site.

Belongs to the pyruvate, phosphate/water dikinase regulatory protein family. PSRP subfamily.

The catalysed reaction is [pyruvate, water dikinase] + ADP = [pyruvate, water dikinase]-phosphate + AMP + H(+). It carries out the reaction [pyruvate, water dikinase]-phosphate + phosphate + H(+) = [pyruvate, water dikinase] + diphosphate. Functionally, bifunctional serine/threonine kinase and phosphorylase involved in the regulation of the phosphoenolpyruvate synthase (PEPS) by catalyzing its phosphorylation/dephosphorylation. The polypeptide is Putative phosphoenolpyruvate synthase regulatory protein (Shewanella frigidimarina (strain NCIMB 400)).